A 501-amino-acid chain; its full sequence is Cytochrome P450 monooxygenase 76AD131 (501 aa).

Residues 1-21 (MGYYAIFAVVLPFLWTCFYLL) traverse the membrane as a helical segment. N-linked (GlcNAc...) asparagine glycans are attached at residues Asn115 and Asn264. Cys444 contacts heme.

Belongs to the cytochrome P450 family. Heme is required as a cofactor. Highly expressed in aerial parts, in both skin and flesh tissues.

It localises to the membrane. It catalyses the reaction tyramine + reduced [NADPH--hemoprotein reductase] + O2 = dopamine + oxidized [NADPH--hemoprotein reductase] + H2O + H(+). It carries out the reaction 3-methoxytyramine + reduced [NADPH--hemoprotein reductase] + O2 = 3,4-dihydroxy-5-methoxyphenethylamine + oxidized [NADPH--hemoprotein reductase] + H2O + H(+). Its pathway is aromatic compound metabolism. The protein operates within alkaloid biosynthesis. Cytochrome P450 monooxygenase participating in the biosynthesis of natural products derived from phenylethylamine, including mescaline, a natural hallucinogen potentially used in psychotherapeutic treatments. Catalyzes the hydroxylation of tyramine to dopamine and of 3-methoxytyramine to 3,4-dihydroxy-5-methoxyphenethylamine. This is Cytochrome P450 monooxygenase 76AD131 from Lophophora williamsii (Peyote).